Here is a 390-residue protein sequence, read N- to C-terminus: MSQSTIESTNKKEINKGKAPAKETILSPRFYTTDFEAMENMDLSINEEELEAICEEFRKDYNRHHFVRNSEFEGAAEKLDPETRELFVDFLEGSCTSEFSGFLLYKELSKRIKDKNPLLAECFAHMARDEARHAGFLNKSMSDFGLQLDLGFLTANKDYTYFPPRSIFYATYLSEKIGYWRYIAIYRHLEKNPNSKIFPLFNYFENWCQDENRHGDFFDALMKAQPRTVKSLSQKITIGGSTFTHPLFDYFHRFRYFLNNLPLTSKLWSRFFLLAVFATMYARDLGIKKDFYSSLGLDARDYDQFVINKTNETAARVFPVVMDVNNKSFYGRLDKIVENNKILSDIASGTGNKVSKTFRKVPKYLSNGYQLLRLYLLKPLDSKDYQPSIR.

The interval Met1–Pro20 is disordered.

Belongs to the AcsF family. Requires Fe cation as cofactor.

It carries out the reaction Mg-protoporphyrin IX 13-monomethyl ester + 3 NADPH + 3 O2 + 2 H(+) = 3,8-divinyl protochlorophyllide a + 3 NADP(+) + 5 H2O. The protein operates within porphyrin-containing compound metabolism; chlorophyll biosynthesis (light-independent). Its function is as follows. Catalyzes the formation of the isocyclic ring in chlorophyll biosynthesis. Mediates the cyclase reaction, which results in the formation of divinylprotochlorophyllide (Pchlide) characteristic of all chlorophylls from magnesium-protoporphyrin IX 13-monomethyl ester (MgPMME). In Prochlorococcus marinus (strain MIT 9301), this protein is Magnesium-protoporphyrin IX monomethyl ester [oxidative] cyclase.